Here is a 247-residue protein sequence, read N- to C-terminus: Phycocyanobilin:ferredoxin oxidoreductase (247 aa).

Belongs to the HY2 family.

The catalysed reaction is (2R,3Z)-phycocyanobilin + 4 oxidized [2Fe-2S]-[ferredoxin] = biliverdin IXalpha + 4 reduced [2Fe-2S]-[ferredoxin] + 4 H(+). In terms of biological role, catalyzes the four-electron reduction of biliverdin IX-alpha (2-electron reduction at both the A and D rings); the reaction proceeds via an isolatable 2-electron intermediate, 181,182-dihydrobiliverdin. This chain is Phycocyanobilin:ferredoxin oxidoreductase (pcyA), found in Prochlorococcus marinus (strain SARG / CCMP1375 / SS120).